Consider the following 1252-residue polypeptide: Guanine nucleotide exchange factor SDC25 (1252 aa).

The SH3 domain occupies 26–97; that stretch reads QPIDVVECTY…PPSFTRSILN (72 aa). Disordered stretches follow at residues 409–454 and 623–648; these read IPAS…DTIW and LNLD…DEYE. A compositionally biased stretch (low complexity) spans 416-428; the sequence is TSCSSETSHHSPS. The 133-residue stretch at 782–914 folds into the N-terminal Ras-GEF domain; sequence SNNRIKGGSK…LLKEVNQKFK (133 aa). Positions 952-1199 constitute a Ras-GEF domain; it reads DPVLFATQLT…YQLSLIIEPK (248 aa). Positions 1201-1252 are disordered; it reads RKKVVPNSNSNNKSQEKSRDDQTDEGKTSTKKDRFSKFQLHKTKKKAPKVSK. A compositionally biased stretch (basic and acidic residues) spans 1214–1236; it reads SQEKSRDDQTDEGKTSTKKDRFS. Over residues 1239 to 1252 the composition is skewed to basic residues; that stretch reads QLHKTKKKAPKVSK.

Its function is as follows. Promotes the exchange of Ras-bound GDP by GTP. This chain is Guanine nucleotide exchange factor SDC25 (SDC25), found in Saccharomyces cerevisiae (strain RM11-1a) (Baker's yeast).